We begin with the raw amino-acid sequence, 507 residues long: Pre-glycoprotein polyprotein GP complex (507 aa).

Gly-2 is lipidated: N-myristoyl glycine; by host. At Gly-2–Glu-17 the chain is on the extracellular side. A helical transmembrane segment spans residues Ala-18–Lys-33. The Cytoplasmic portion of the chain corresponds to Gly-34–Asp-58. Cys-57 provides a ligand contact to Zn(2+). The Extracellular portion of the chain corresponds to Gly-59–Asp-445. Cystine bridges form between Cys-86-Cys-247, Cys-292-Cys-305, Cys-314-Cys-323, and Cys-377-Cys-398. N-linked (GlcNAc...) asparagine; by host glycosylation is found at Asn-89, Asn-111, Asn-179, and Asn-240. Residues Asn-378, Asn-386, Asn-403, and Asn-408 are each glycosylated (N-linked (GlcNAc...) asparagine; by host). The chain crosses the membrane as a helical span at residues Ile-446–Pro-466. Topologically, residues Thr-467–Lys-507 are cytoplasmic. Zn(2+) contacts are provided by His-468, His-470, Cys-476, His-480, Cys-488, and Cys-490.

The protein belongs to the arenaviridae GPC protein family. Interacts with glycoprotein G2. Part of the GP complex (GP-C) together with glycoprotein G1 and glycoprotein G2. The GP-complex interacts with protein Z, which interacts with ribonucleocapsid; these interactions may induce virion budding. In terms of assembly, homotrimer; disulfide-linked. In pre-fusion state, G1 homotrimers bind G2 homotrimers via ionic interactions. Part of the GP complex (GP-C) together with glycoprotein G2 and the stable signal peptide. The GP-complex interacts with protein Z, which interacts with ribonucleocapsid; these interactions may induce virion budding. As to quaternary structure, homotrimer. Interacts with the stable signal peptide. In pre-fusion state, G2 homotrimers bind G1 homotrimers via ionic interactions. Part of the GP complex (GP-C) together with glycoprotein G1 and the stable signal peptide. Acidification in the endosome triggers rearrangements, which ultimately leads to a 6 helix bundle formed by the two heptad repeat domains (HR1 and HR2) in post-fusion state. The GP-complex interacts with protein Z, which interacts with ribonucleocapsid; these interactions may induce virion budding. Specific enzymatic cleavages in vivo yield mature proteins. GP-C polyprotein is cleaved in the endoplasmic reticulum by the host protease MBTPS1. Only cleaved glycoprotein is incorporated into virions. In terms of processing, the SSP remains stably associated with the GP complex following cleavage by signal peptidase and plays crucial roles in the trafficking of GP through the secretory pathway. Post-translationally, myristoylation is necessary for GP2-mediated fusion activity.

It is found in the virion membrane. The protein localises to the host endoplasmic reticulum membrane. Its subcellular location is the host Golgi apparatus membrane. The protein resides in the host cell membrane. Functions as a cleaved signal peptide that is retained as the third component of the GP complex (GP-C). Helps to stabilize the spike complex in its native conformation. The SSP is required for efficient glycoprotein expression, post-translational maturation cleavage of G1 and G2, glycoprotein transport to the cell surface plasma membrane, formation of infectious virus particles, and acid pH-dependent glycoprotein-mediated cell fusion. Functionally, forms the virion spikes together with glycoprotein G2. The glycoprotein spike trimers are connected to the underlying matrix. Interacts with the host receptor leading to virus endocytosis. Its function is as follows. Forms the virion spikes together with glycoprotein G1. The glycoprotein spike trimers are connected to the underlying matrix. Class I viral fusion protein that directs fusion of viral and host endosomal membranes, leading to delivery of the nucleocapsid into the cytoplasm. Membrane fusion is mediated by irreversible conformational changes induced by acidification. The sequence is that of Pre-glycoprotein polyprotein GP complex from Allpahuayo mammarenavirus (isolate Rat/Peru/CLHP-2472/1997) (ALLV).